The primary structure comprises 288 residues: uncharacterized protein (288 aa).

Basic and acidic residues predominate over residues 1–12 (MTEGRCAQHPDG). The tract at residues 1–20 (MTEGRCAQHPDGLDVQDVCD) is disordered.

It belongs to the class IV-like SAM-binding methyltransferase superfamily. RNA methyltransferase TrmH family.

This is an uncharacterized protein from Mycobacterium bovis (strain ATCC BAA-935 / AF2122/97).